Reading from the N-terminus, the 862-residue chain is Putative cargo-transport protein ypp1 (862 aa).

3 TPR repeats span residues 342-377, 460-493, and 494-527; these read QQIF…KSHE, SFMY…QPTN, and TNAL…NPKY. Phosphoserine occurs at positions 632, 633, and 637. TPR repeat units lie at residues 665–698, 705–738, 740–772, and 814–847; these read ILGF…RRGK, QKLW…DHEC, WVYY…DPED, and PEAW…ADTN.

Belongs to the YPP1 family.

It localises to the cytoplasm. Involved in endocytosis. The protein is Putative cargo-transport protein ypp1 (ypp1) of Schizosaccharomyces pombe (strain 972 / ATCC 24843) (Fission yeast).